Consider the following 146-residue polypeptide: UPF0735 ACT domain-containing protein Cbei_1295 (146 aa).

The ACT domain maps to 70-145 (TYNIIFKNEK…NVEKVEFIGM (76 aa)).

It belongs to the UPF0735 family.

This is UPF0735 ACT domain-containing protein Cbei_1295 from Clostridium beijerinckii (strain ATCC 51743 / NCIMB 8052) (Clostridium acetobutylicum).